The chain runs to 118 residues: Large ribosomal subunit protein bL20 (118 aa).

This sequence belongs to the bacterial ribosomal protein bL20 family.

Its function is as follows. Binds directly to 23S ribosomal RNA and is necessary for the in vitro assembly process of the 50S ribosomal subunit. It is not involved in the protein synthesizing functions of that subunit. This chain is Large ribosomal subunit protein bL20, found in Serratia proteamaculans (strain 568).